Consider the following 431-residue polypeptide: Enolase (431 aa).

(2R)-2-phosphoglycerate is bound at residue Gln167. Glu209 acts as the Proton donor in catalysis. Mg(2+) is bound by residues Asp246, Glu290, and Asp317. Lys342, Arg371, Ser372, and Lys393 together coordinate (2R)-2-phosphoglycerate. The Proton acceptor role is filled by Lys342.

This sequence belongs to the enolase family. As to quaternary structure, component of the RNA degradosome, a multiprotein complex involved in RNA processing and mRNA degradation. Mg(2+) serves as cofactor.

Its subcellular location is the cytoplasm. The protein localises to the secreted. The protein resides in the cell surface. The enzyme catalyses (2R)-2-phosphoglycerate = phosphoenolpyruvate + H2O. The protein operates within carbohydrate degradation; glycolysis; pyruvate from D-glyceraldehyde 3-phosphate: step 4/5. In terms of biological role, catalyzes the reversible conversion of 2-phosphoglycerate (2-PG) into phosphoenolpyruvate (PEP). It is essential for the degradation of carbohydrates via glycolysis. The polypeptide is Enolase (Enterobacter sp. (strain 638)).